A 538-amino-acid chain; its full sequence is CTP synthase (538 aa).

The interval 1-270 is amidoligase domain; sequence MSRTKFIFVT…DEVVLKTMGM (270 aa). Ser15 provides a ligand contact to CTP. Position 15 (Ser15) interacts with UTP. An ATP-binding site is contributed by 16–21; that stretch reads SLGKGV. Tyr56 is a binding site for L-glutamine. Asp73 lines the ATP pocket. Residues Asp73 and Glu143 each contribute to the Mg(2+) site. Residues 150–152, 190–195, and Lys226 contribute to the CTP site; these read DIE and KTKPTQ. UTP-binding positions include 190–195 and Lys226; that span reads KTKPTQ. In terms of domain architecture, Glutamine amidotransferase type-1 spans 295-537; it reads QIAVVGKYIS…IRASVKYSKK (243 aa). Gly357 contacts L-glutamine. The active-site Nucleophile; for glutamine hydrolysis is the Cys384. L-glutamine contacts are provided by residues 385 to 388, Glu408, and Arg465; that span reads LGMQ. Active-site residues include His510 and Glu512.

It belongs to the CTP synthase family. Homotetramer.

It carries out the reaction UTP + L-glutamine + ATP + H2O = CTP + L-glutamate + ADP + phosphate + 2 H(+). The enzyme catalyses L-glutamine + H2O = L-glutamate + NH4(+). The catalysed reaction is UTP + NH4(+) + ATP = CTP + ADP + phosphate + 2 H(+). The protein operates within pyrimidine metabolism; CTP biosynthesis via de novo pathway; CTP from UDP: step 2/2. With respect to regulation, allosterically activated by GTP, when glutamine is the substrate; GTP has no effect on the reaction when ammonia is the substrate. The allosteric effector GTP functions by stabilizing the protein conformation that binds the tetrahedral intermediate(s) formed during glutamine hydrolysis. Inhibited by the product CTP, via allosteric rather than competitive inhibition. Catalyzes the ATP-dependent amination of UTP to CTP with either L-glutamine or ammonia as the source of nitrogen. Regulates intracellular CTP levels through interactions with the four ribonucleotide triphosphates. The protein is CTP synthase of Leptospira interrogans serogroup Icterohaemorrhagiae serovar copenhageni (strain Fiocruz L1-130).